A 453-amino-acid chain; its full sequence is Bifunctional protein GlmU (453 aa).

The segment at 1-225 (MNIVILAAGT…EWETLGVNSK (225 aa)) is pyrophosphorylase. Residues 6 to 9 (LAAG), lysine 20, glutamine 71, 76 to 77 (GT), 98 to 100 (YGD), glycine 135, glutamate 150, asparagine 165, and asparagine 223 contribute to the UDP-N-acetyl-alpha-D-glucosamine site. Aspartate 100 is a Mg(2+) binding site. Residue asparagine 223 coordinates Mg(2+). A linker region spans residues 226–246 (AQLAELERIHQRTIADALLVD). Positions 247–453 (GVTLADPARV…GYVRPVKKKS (207 aa)) are N-acetyltransferase. UDP-N-acetyl-alpha-D-glucosamine is bound by residues arginine 329 and lysine 347. Catalysis depends on histidine 359, which acts as the Proton acceptor. Residues tyrosine 362 and asparagine 373 each coordinate UDP-N-acetyl-alpha-D-glucosamine. Residues alanine 376, 382-383 (NY), serine 401, and alanine 419 contribute to the acetyl-CoA site.

The protein in the N-terminal section; belongs to the N-acetylglucosamine-1-phosphate uridyltransferase family. It in the C-terminal section; belongs to the transferase hexapeptide repeat family. In terms of assembly, homotrimer. Requires Mg(2+) as cofactor.

Its subcellular location is the cytoplasm. The catalysed reaction is alpha-D-glucosamine 1-phosphate + acetyl-CoA = N-acetyl-alpha-D-glucosamine 1-phosphate + CoA + H(+). It carries out the reaction N-acetyl-alpha-D-glucosamine 1-phosphate + UTP + H(+) = UDP-N-acetyl-alpha-D-glucosamine + diphosphate. It functions in the pathway nucleotide-sugar biosynthesis; UDP-N-acetyl-alpha-D-glucosamine biosynthesis; N-acetyl-alpha-D-glucosamine 1-phosphate from alpha-D-glucosamine 6-phosphate (route II): step 2/2. It participates in nucleotide-sugar biosynthesis; UDP-N-acetyl-alpha-D-glucosamine biosynthesis; UDP-N-acetyl-alpha-D-glucosamine from N-acetyl-alpha-D-glucosamine 1-phosphate: step 1/1. Its pathway is bacterial outer membrane biogenesis; LPS lipid A biosynthesis. In terms of biological role, catalyzes the last two sequential reactions in the de novo biosynthetic pathway for UDP-N-acetylglucosamine (UDP-GlcNAc). The C-terminal domain catalyzes the transfer of acetyl group from acetyl coenzyme A to glucosamine-1-phosphate (GlcN-1-P) to produce N-acetylglucosamine-1-phosphate (GlcNAc-1-P), which is converted into UDP-GlcNAc by the transfer of uridine 5-monophosphate (from uridine 5-triphosphate), a reaction catalyzed by the N-terminal domain. This is Bifunctional protein GlmU from Burkholderia ambifaria (strain MC40-6).